Consider the following 566-residue polypeptide: MKTIIALSYIFCLVFAQNLPGNDKSTATLCLGHHAVPNGTLVKTITNDQIEVTNATELVQSSSTGRICDSPHRILDGKNCTLVDALLGDPHCDGFQNEKWDLFVERSKAFSNCYPYDVPDYASLRSLVASSGTLEFINESFNWTGVTQSGGSYACKRGSDNSFFSRLNWLYESESKYPVLNVTMPNNGNFDKLYIWGVHHPSTDKEQTNLYVRASGRVTVSTKRSQQTIIPNIGSRPWVRGLSSRISIYWTIVKPGDILLINSNGNLIAPRGYFKIRTGKSSIMRSDAPIGTCSSECITPNGSIPNDKPFQNVNKITYGACPKYVKQNTLKLATGMRNVPEKQTRGIFGAIAGFIENGWEGMVDGWYGFRHQNSEGTGQAADLKSTQAAIDQINGKLNRVIEKTNEKFHQIEKEFSEVEGRIQDLEKYVEDTKIDLWSYNAELLVALENQHTIDLTDSEMNKLFEKTRRQLRENAEDMGNGCFKIYHKCDNACIGSIRNGTYDHDVYRDEALNNRFQIKGVELKSGYKDWILWISFAISCFLLCVVLLGFIMWACQKGNIRCNICI.

The N-terminal stretch at 1–16 (MKTIIALSYIFCLVFA) is a signal peptide. Residues 17–530 (QNLPGNDKST…VELKSGYKDW (514 aa)) lie on the Extracellular side of the membrane. Intrachain disulfides connect C30–C482, C68–C293, C80–C92, C113–C155, C297–C321, and C489–C493. N38, N54, and N79 each carry an N-linked (GlcNAc...) asparagine; by host glycan. N138, N142, N181, and N301 each carry an N-linked (GlcNAc...) asparagine; by host glycan. N499 carries an N-linked (GlcNAc...) asparagine; by host glycan. Residues 531–551 (ILWISFAISCFLLCVVLLGFI) traverse the membrane as a helical segment. Residues 552-566 (MWACQKGNIRCNICI) are Cytoplasmic-facing. Residues C555, C562, and C565 are each lipidated (S-palmitoyl cysteine; by host).

This sequence belongs to the influenza viruses hemagglutinin family. In terms of assembly, homotrimer of disulfide-linked HA1-HA2. In terms of processing, palmitoylated. Post-translationally, in natural infection, inactive HA is matured into HA1 and HA2 outside the cell by one or more trypsin-like, arginine-specific endoprotease secreted by the bronchial epithelial cells. One identified protease that may be involved in this process is secreted in lungs by club cells.

It is found in the virion membrane. The protein localises to the host apical cell membrane. Functionally, binds to sialic acid-containing receptors on the cell surface, bringing about the attachment of the virus particle to the cell. This attachment induces virion internalization either through clathrin-dependent endocytosis or through clathrin- and caveolin-independent pathway. Plays a major role in the determination of host range restriction and virulence. Class I viral fusion protein. Responsible for penetration of the virus into the cell cytoplasm by mediating the fusion of the membrane of the endocytosed virus particle with the endosomal membrane. Low pH in endosomes induces an irreversible conformational change in HA2, releasing the fusion hydrophobic peptide. Several trimers are required to form a competent fusion pore. This is Hemagglutinin from Influenza A virus (strain A/Memphis/4/1980 H3N2).